The sequence spans 424 residues: Phosphoribosylamine--glycine ligase (424 aa).

The region spanning 111–312 (KAFVKECGIK…LLDLCLATAK (202 aa)) is the ATP-grasp domain. ATP is bound at residue 137–189 (IQNASFPLVIKALNKNTSIVYQEEEAIKILEDAFKQSNEPVIIEPFLEGFELS).

Belongs to the GARS family.

The catalysed reaction is 5-phospho-beta-D-ribosylamine + glycine + ATP = N(1)-(5-phospho-beta-D-ribosyl)glycinamide + ADP + phosphate + H(+). It participates in purine metabolism; IMP biosynthesis via de novo pathway; N(1)-(5-phospho-D-ribosyl)glycinamide from 5-phospho-alpha-D-ribose 1-diphosphate: step 2/2. The sequence is that of Phosphoribosylamine--glycine ligase (purD) from Helicobacter pylori (strain ATCC 700392 / 26695) (Campylobacter pylori).